We begin with the raw amino-acid sequence, 773 residues long: Elongin-A (773 aa).

The TFIIS N-terminal domain maps to 4 to 79 (ESALQVVEKL…AQWKKLVPVE (76 aa)). Positions 79–93 (ERNNEAEDQDFEKSN) are enriched in basic and acidic residues. The interval 79–480 (ERNNEAEDQD…PRKVPTDVLP (402 aa)) is disordered. Residues 112 to 124 (YQESWQASGSQPY) show a composition bias toward polar residues. Residues 136–156 (LPELERPHKVAHGHERRDERK) are compositionally biased toward basic and acidic residues. Low complexity predominate over residues 162-174 (SPPYSSDPESSDY). At Ser-195 the chain carries Phosphoserine. The span at 239–248 (KPHKSSHKEK) shows a compositional bias: basic residues. Basic and acidic residues-rich tracts occupy residues 249–265 (RPVD…MGRE) and 271–304 (SSKE…EGNS). Phosphoserine is present on Ser-310. Basic and acidic residues-rich tracts occupy residues 317–339 (SDNH…KNKQ) and 368–380 (QEGK…DRKS). 2 positions are modified to phosphoserine: Ser-380 and Ser-383. Lys-430 bears the N6-acetyllysine mark. Position 515 is a phosphoserine (Ser-515). The activation domain stretch occupies residues 521-680 (EAGFTGRRMN…PPRDVRRRQE (160 aa)). The BC-box stretch occupies residues 549–558 (TLHQQCIRVL). Residues 565–609 (IFEVGGVPYSVLEPVLERCTPDQLYRIEECNHVLIEETDQLWKVH) enclose the F-box domain. Residues 671–747 (PPRDVRRRQE…VASSSVSYDP (77 aa)) are disordered. Low complexity predominate over residues 704 to 718 (SSHVPASNSSSSFHS). The span at 728 to 744 (PSTSSAHLAPVASSSVS) shows a compositional bias: polar residues.

Heterotrimer of an A (ELOA, ELOA2 or ELOA3P), ELOB and ELOC subunit. Part of a multisubunit ubiquitin ligase complex consisting of elongin BC complex (ELOB and ELOC), elongin A/ELOA, RBX1 and CUL5. Interacts with ERCC6; the interaction is induced by DNA damaging agents or inhibitors of RNA polymerase II elongation. Interacts (via BC-box) with CUL5.

It localises to the nucleus. Functionally, SIII, also known as elongin, is a general transcription elongation factor that increases the RNA polymerase II transcription elongation past template-encoded arresting sites. Subunit A is transcriptionally active and its transcription activity is strongly enhanced by binding to the dimeric complex of the SIII regulatory subunits B and C (elongin BC complex). As part of a multisubunit complex composed of elongin BC complex (ELOB and ELOC), elongin A/ELOA, RBX1 and CUL5; polyubiquitinates monoubiquitinated POLR2A. The polypeptide is Elongin-A (Eloa) (Rattus norvegicus (Rat)).